Consider the following 268-residue polypeptide: Proliferating cell nuclear antigen (268 aa).

Residues 61-80 mediate DNA binding; it reads RCDRNPSMGMNLNNMAKMLK.

The protein belongs to the PCNA family.

The protein resides in the nucleus. In terms of biological role, this protein is an auxiliary protein of DNA polymerase delta and is involved in the control of eukaryotic DNA replication by increasing the polymerase's processibility during elongation of the leading strand. This is Proliferating cell nuclear antigen from Catharanthus roseus (Madagascar periwinkle).